A 231-amino-acid polypeptide reads, in one-letter code: Nuclear transcription factor Y subunit C-9 (231 aa).

The disordered stretch occupies residues 211–231 (NPYMGQPMWQQQAPDQPDQEN).

It belongs to the NFYC/HAP5 subunit family. In terms of assembly, heterotrimeric transcription factor composed of three components, NF-YA, NF-YB and NF-YC. Interacts with NFYA2, NFYB2, CO and RGA. Interacts with REF6 (via N-terminus). Ubiquitous. Present in etiolated seedlings.

The protein resides in the nucleus. Stimulates the transcription of various genes by recognizing and binding to a CCAAT motif in promoters. Interacts with REF6 to directly regulate SOC1 transcription in response to flowering signals from photoperiod and gibberellic acid pathways. This is Nuclear transcription factor Y subunit C-9 (NFYC9) from Arabidopsis thaliana (Mouse-ear cress).